The chain runs to 428 residues: CRISPR system endoribonuclease Csm6 (428 aa).

Residues 1–145 are CARF domain; sequence MKILISAVGT…RANREYTALT (145 aa). An HEPN domain region spans residues 146 to 428; sequence ESEIDALIME…QNKELIKMLE (283 aa).

Belongs to the CRISPR-associated Csm6 family. In terms of assembly, homodimer. The composite ssRNase active site is formed at the dimer interface.

Non-specific ssRNase activity is allosterically activated about 1000-fold by cyclic hexaadenylate (cA6), a second messenger produced by Cas10 of the ternary Csm effector complex in the presence of a cognate target RNA. ssRNase activity is inhibited by physiological concentrations of ATP (1 mM), activity is restored by cOA. CRISPR (clustered regularly interspaced short palindromic repeat) is an adaptive immune system that provides protection against mobile genetic elements (viruses, transposable elements and conjugative plasmids). CRISPR clusters contain spacers, sequences complementary to antecedent mobile elements, and target invading nucleic acids. CRISPR clusters are transcribed and processed into CRISPR RNA (crRNA). The type III-A Csm complex binds crRNA and acts as a crRNA-guided RNase, DNase and cyclic oligoadenylate synthase; binding of target RNA cognate to the crRNA is required for all activities. In a heterologous host this Csm effector complex restricts ssRNA phage MS2, suggesting it may target RNA viruses in vivo. This protein is not part of the Csm complex. Functionally, csm functions as a non-specific ssDNase. Base-pairing between crRNA and target RNA to form a ternary Csm complex activates a ssDNase activity; target RNA cleavage suppresses the ssDNase, a temporal control that prevents uncontrolled DNA degradation. Viral RNA transcripts probably tether the Csm complex to the viral genome, recruiting Cas10 ssDNA activity which is able to degrade DNA in the transcription bubble, spatially controlling the DNase activity. Its function is as follows. A single-strand-specific endoribonuclease (ssRNase) that is approximately 1000-fold stimulated by cyclic oligoadenylate (cOA); although several species of cOA are synthesized by this organism only cyclic hexaadenylate (cA6) stimulates the ssRNase activity. Cleaves preferentially within GA or AA dinucleotides, although the presence of cA6 broadens the preference. Linear oligoadenylates do not activate the RNase. The protein is CRISPR system endoribonuclease Csm6 of Streptococcus thermophilus.